The primary structure comprises 276 residues: MALVKTKPTSPGRRSMVKVVNPDLHKGAPHAPLLEKQIQKSGRNNNGHITTRHKGGGHKHHYRVVDFKRNDKDGIPAKIERLEYDPNRSANIALVLFADGERRYIIAPKGAVVGQAIANGSEAPIKAGNNLPIRNIPVGTTIHCVEILPGKGAQVARSAGTSAVLLAREGIYAQVRLRSGEVRRVHIECRATIGEVGNEEHSLRQIGKAGATRWRGIRPTVRGVVMNPVDHPHGGGEGKTAAGRDPVSPWGTPTKGYRTRRNKRTDSMIVQRRHKR.

Disordered regions lie at residues 37–59 (QIQKSGRNNNGHITTRHKGGGHK) and 225–276 (VMNP…RHKR). The span at 39-49 (QKSGRNNNGHI) shows a compositional bias: polar residues. The segment covering 50–59 (TTRHKGGGHK) has biased composition (basic residues).

This sequence belongs to the universal ribosomal protein uL2 family. Part of the 50S ribosomal subunit. Forms a bridge to the 30S subunit in the 70S ribosome.

Its function is as follows. One of the primary rRNA binding proteins. Required for association of the 30S and 50S subunits to form the 70S ribosome, for tRNA binding and peptide bond formation. It has been suggested to have peptidyltransferase activity; this is somewhat controversial. Makes several contacts with the 16S rRNA in the 70S ribosome. The chain is Large ribosomal subunit protein uL2 from Ralstonia pickettii (strain 12J).